We begin with the raw amino-acid sequence, 214 residues long: 2-phospho-L-lactate guanylyltransferase (214 aa).

The protein belongs to the CofC family. Homodimer.

The catalysed reaction is (2S)-2-phospholactate + GTP + H(+) = (2S)-lactyl-2-diphospho-5'-guanosine + diphosphate. It functions in the pathway cofactor biosynthesis; coenzyme F420 biosynthesis. Guanylyltransferase that catalyzes the activation of (2S)-2-phospholactate (2-PL) as (2S)-lactyl-2-diphospho-5'-guanosine, via the condensation of 2-PL with GTP. It is involved in the biosynthesis of coenzyme F420, a hydride carrier cofactor. The sequence is that of 2-phospho-L-lactate guanylyltransferase from Methanoregula boonei (strain DSM 21154 / JCM 14090 / 6A8).